We begin with the raw amino-acid sequence, 506 residues long: ATP synthase subunit alpha (506 aa).

ATP is bound at residue 172–179; sequence GDRKTGKT.

Belongs to the ATPase alpha/beta chains family. F-type ATPases have 2 components, CF(1) - the catalytic core - and CF(0) - the membrane proton channel. CF(1) has five subunits: alpha(3), beta(3), gamma(1), delta(1), epsilon(1). CF(0) has three main subunits: a(1), b(2) and c(9-12). The alpha and beta chains form an alternating ring which encloses part of the gamma chain. CF(1) is attached to CF(0) by a central stalk formed by the gamma and epsilon chains, while a peripheral stalk is formed by the delta and b chains.

The protein localises to the cell membrane. It carries out the reaction ATP + H2O + 4 H(+)(in) = ADP + phosphate + 5 H(+)(out). Produces ATP from ADP in the presence of a proton gradient across the membrane. The alpha chain is a regulatory subunit. The protein is ATP synthase subunit alpha of Lactobacillus gasseri (strain ATCC 33323 / DSM 20243 / BCRC 14619 / CIP 102991 / JCM 1131 / KCTC 3163 / NCIMB 11718 / NCTC 13722 / AM63).